The sequence spans 218 residues: uncharacterized protein (218 aa).

This is an uncharacterized protein from Acanthamoeba polyphaga (Amoeba).